Consider the following 579-residue polypeptide: SHC-transforming protein 1 (579 aa).

M1 carries the N-acetylmethionine modification. The interval 1–137 (MDLLPPKPKY…QLGGEEWTRH (137 aa)) is disordered. Over residues 16-44 (ESLSSLEEGASGSTPPEELPSPSASSLGP) the composition is skewed to low complexity. A phosphoserine mark is found at S36 and S139. Residue K154 is modified to N6-acetyllysine. A PID domain is found at 156-339 (MGPGVSYLVR…AGFDGSAWDE (184 aa)). The disordered stretch occupies residues 337–357 (WDEEEEEPPDHQYYNDFPGKE). A CH1 region spans residues 340–483 (EEEEPPDHQY…SMAEQLQGEP (144 aa)). Y349, Y350, and Y423 each carry phosphotyrosine. Residues 432–451 (ARQAGGGAGPPNPSLNGSAP) form a disordered region. Residue S449 is modified to Phosphoserine. An SH2 domain is found at 484–575 (WFHGKLSRRE…GSELCLQQPV (92 aa)).

As to quaternary structure, interacts with CPNE3; this interaction may mediate the binding of CPNE3 with ERBB2. Interacts with the NPXY motif of tyrosine-phosphorylated IGF1R and INSR in vitro via the PID domain. Once activated, binds to GRB2. Interacts with tyrosine-phosphorylated DDR2 and CD3T. Interacts with the N-terminal region of APS. Interacts with GRB7 and KIT. Interacts with PTK2/FAK1. Interacts with phosphorylated LRP1 and IRS4. Interacts with FLT4 (tyrosine-phosphorylated). Interacts with PDGFRB (tyrosine-phosphorylated). Interacts with ERBB4. Interacts with TEK/TIE2 (tyrosine-phosphorylated). Interacts with ALK, GAB2, TRIM31, INPP5D/SHIP1 and INPPL1/SHIP2. Interacts with PTPN6/SHP (tyrosine phosphorylated). Identified in a complex containing FGFR4, NCAM1, CDH2, PLCG1, FRS2, SRC, SHC1, GAP43 and CTTN. Interacts with EPHB1 and GRB2; activates the MAPK/ERK cascade to regulate cell migration. Interacts with the Trk receptors NTRK1, NTRK2 and NTRK3; in a phosphotyrosine-dependent manner. Interacts with CEACAM1; this interaction is CEACAM1-phosphorylation-dependent and mediates interaction with EGFR or INSR resulting in decrease coupling of SHC1 to the MAPK3/ERK1-MAPK1/ERK2 pathway. Interacts (via PID domain) with PEAK1 (when phosphorylated at 'Tyr-1177'). Found in a complex with PPP1CA, PPP1CC, SHC1 and PEAK1. Post-translationally, phosphorylated in response to FLT4 signaling. Tyrosine phosphorylated by ligand-activated PDGFRB. May be tyrosine phosphorylated by activated PTK2/FAK1. Tyrosine phosphorylated by TEK/TIE2. Tyrosine phosphorylated by activated PTK2B/PYK2. Dephosphorylation by PTPN2 may regulate interaction with GRB2. Phosphorylated by activated epidermal growth factor receptor. Phosphorylated in response to KIT signaling. Isoform p47Shc and isoform p52Shc are phosphorylated on tyrosine residues of the Pro-rich domain. Isoform p66Shc is phosphorylated on Ser-36 by PRKCB upon treatment with insulin, hydrogen peroxide or irradiation with ultraviolet light. FLT3 signaling promotes tyrosine phosphorylation of isoform p47Shc and isoform p52Shc. Also tyrosine phosphorylated by ligand-activated ALK. In terms of tissue distribution, widely expressed. Expressed in neural stem cells but absent in mature neurons.

Its subcellular location is the cytoplasm. It is found in the cell junction. The protein resides in the focal adhesion. It localises to the mitochondrion matrix. The protein localises to the mitochondrion. Its function is as follows. Signaling adapter that couples activated growth factor receptors to signaling pathways. Participates in signaling downstream of the angiopoietin receptor TEK/TIE2, and plays a role in the regulation of endothelial cell migration and sprouting angiogenesis. Participates in a signaling cascade initiated by activated KIT and KITLG/SCF. Isoform p47Shc and isoform p52Shc, once phosphorylated, couple activated receptor kinases to Ras via the recruitment of the GRB2/SOS complex and are implicated in the cytoplasmic propagation of mitogenic signals. Isoform p47Shc and isoform p52 may thus function as initiators of the Ras signaling cascade in various non-neuronal systems. Isoform p66Shc does not mediate Ras activation, but is involved in signal transduction pathways that regulate the cellular response to oxidative stress and life span. Isoform p66Shc acts as a downstream target of the tumor suppressor p53 and is indispensable for the ability of stress-activated p53 to induce elevation of intracellular oxidants, cytochrome c release and apoptosis. The expression of isoform p66Shc has been correlated with life span. This is SHC-transforming protein 1 (Shc1) from Mus musculus (Mouse).